The primary structure comprises 546 residues: MSSYFFTHFALHTIGTLGGVIPDFPWLSVSILFPIGCAFLIPFFPDKGEGKEVRWFALSVALITFLVTVGSYINGFDINNEDVQLKESINWLPNLGLTWSVGADGMSMPLILLTSFITALAVLAAWPVKFKPKLFFFLILIMDGGQIAVFAVQDMLLFFLSWELELLPVYLLLAIWGGKNRQYAATKFIIYTAGSSIFILLAALAMGFYGTEVPNFEFSHLANQDFGQNFQILCYIGLLIAFGVKLPIVPLHTWLPDAHGEATAPVHMLLAGILLKMGGYALLRFNAQLLPIAHAQFSPLLIVLGVVNIIYAALTSFAQRNLKRKIAYSSISHMGFVLIGIGSFSSLGTSGAMLQMVSHGLIGASLFFLVGATYDRTKTLKLDEMGGVGQKMRIMFALWTACSLASLALPGMSGFVSELMVFTGFVTDEVYTLPFRVIMASLAAIGVILTPIYLLSMLREIFFGKENPKLTEDKNLIDAEPREIYIIACLLLPIIGIGLYPRLVTESYLATINNLVDRDLNAVKNIPKTNVFAGNKSNQILKAPTI.

14 helical membrane-spanning segments follow: residues 24–44 (FPWLSVSILFPIGCAFLIPFF), 56–76 (FALSVALITFLVTVGSYINGF), 108–128 (MPLILLTSFITALAVLAAWPV), 132–152 (PKLFFFLILIMDGGQIAVFAV), 156–176 (LLFFLSWELELLPVYLLLAIW), 188–208 (FIIYTAGSSIFILLAALAMGF), 232–252 (ILCYIGLLIAFGVKLPIVPLH), 263–283 (TAPVHMLLAGILLKMGGYALL), 297–317 (FSPLLIVLGVVNIIYAALTSF), 326–346 (IAYSSISHMGFVLIGIGSFSS), 352–372 (AMLQMVSHGLIGASLFFLVGA), 396–416 (FALWTACSLASLALPGMSGFV), 437–457 (VIMASLAAIGVILTPIYLLSM), and 484–504 (IYIIACLLLPIIGIGLYPRLV).

It belongs to the complex I subunit 4 family.

It localises to the cellular thylakoid membrane. The catalysed reaction is a plastoquinone + NADH + (n+1) H(+)(in) = a plastoquinol + NAD(+) + n H(+)(out). It catalyses the reaction a plastoquinone + NADPH + (n+1) H(+)(in) = a plastoquinol + NADP(+) + n H(+)(out). In terms of biological role, NDH-1 shuttles electrons from NAD(P)H, via FMN and iron-sulfur (Fe-S) centers, to quinones in the respiratory chain. The immediate electron acceptor for the enzyme in this species is believed to be plastoquinone. Couples the redox reaction to proton translocation (for every two electrons transferred, four hydrogen ions are translocated across the cytoplasmic membrane), and thus conserves the redox energy in a proton gradient. This is NAD(P)H-quinone oxidoreductase chain 4 from Prochlorococcus marinus subsp. pastoris (strain CCMP1986 / NIES-2087 / MED4).